The sequence spans 101 residues: MSSFKHLSVNQLVQMTEAKSVQIVDIRDGNSFNNGHIDGAFNLNNENLAHFIGQADMDRPLVVVCYHGISSQNAAQYLCEQGFDDVYSLDGGFSAWHEANA.

In terms of domain architecture, Rhodanese spans 17-101; sequence EAKSVQIVDI…GFSAWHEANA (85 aa). Catalysis depends on Cys-65, which acts as the Cysteine persulfide intermediate.

Belongs to the GlpE family.

The protein localises to the cytoplasm. It carries out the reaction thiosulfate + hydrogen cyanide = thiocyanate + sulfite + 2 H(+). The enzyme catalyses thiosulfate + [thioredoxin]-dithiol = [thioredoxin]-disulfide + hydrogen sulfide + sulfite + 2 H(+). Functionally, transferase that catalyzes the transfer of sulfur from thiosulfate to thiophilic acceptors such as cyanide or dithiols. May function in a CysM-independent thiosulfate assimilation pathway by catalyzing the conversion of thiosulfate to sulfite, which can then be used for L-cysteine biosynthesis. In Shewanella oneidensis (strain ATCC 700550 / JCM 31522 / CIP 106686 / LMG 19005 / NCIMB 14063 / MR-1), this protein is Thiosulfate sulfurtransferase GlpE.